The following is a 305-amino-acid chain: Glycine--tRNA ligase alpha subunit (305 aa).

The protein belongs to the class-II aminoacyl-tRNA synthetase family. Tetramer of two alpha and two beta subunits.

The protein resides in the cytoplasm. It carries out the reaction tRNA(Gly) + glycine + ATP = glycyl-tRNA(Gly) + AMP + diphosphate. This is Glycine--tRNA ligase alpha subunit from Streptococcus pyogenes serotype M18 (strain MGAS8232).